The primary structure comprises 43 residues: Disintegrin CV (43 aa).

4 cysteine pairs are disulfide-bonded: Cys1/Cys10, Cys6/Cys29, Cys7/Cys34, and Cys19/Cys36. The 43-residue stretch at 1 to 43 (CTTGPCCRQCKLKPAGTTCWRTSVSSHYCTGRSCECPSYPGNG) folds into the Disintegrin domain. The Cell attachment site; atypical (RTS) signature appears at 21–23 (RTS).

Belongs to the disintegrin family. Short disintegrin subfamily. As to quaternary structure, monomer. In terms of tissue distribution, expressed by the venom gland.

It localises to the secreted. In terms of biological role, specifically interacts with the alpha-1/beta-1 integrin (ITGA1/ITGB1). Exhibits highly inhibitory effects on cell adhesion and cell migration to collagens I and IV. Also shows in vivo anti-angiogenic activity. The chain is Disintegrin CV from Cerastes vipera (Sahara sand viper).